Consider the following 428-residue polypeptide: Endoplasmic reticulum junction formation protein lunapark (428 aa).

A lipid anchor (N-myristoyl glycine) is attached at Gly-2. The Cytoplasmic portion of the chain corresponds to 2 to 45 (GGLFSRWRTKLSTVEVLESIDKEIQALEEFREKNQRLQKLRVGR). Positions 16-43 (EVLESIDKEIQALEEFREKNQRLQKLRV) form a coiled coil. A helical transmembrane segment spans residues 46–66 (LILYSSVLYLFTCLIVYLWYL). At 67–77 (PDEFTARLAMT) the chain is on the lumenal side. Residues 78–98 (LPFFAFPLIIWSIRTVIIFFF) form a helical membrane-spanning segment. The Cytoplasmic portion of the chain corresponds to 99–428 (SKRTERNNEA…ELNGESLTAE (330 aa)). Residues 102–128 (TERNNEALDDLKSQRKKILEEVMEKET) are a coiled coil. A phosphoserine mark is found at Ser-114, Ser-153, Ser-177, Ser-182, and Ser-194. Positions 143-248 (SKKAKECEPP…PPGPPLARPI (106 aa)) are disordered. Over residues 185 to 198 (QGPPPQVPVSPGPP) the composition is skewed to pro residues. Residues Thr-211 and Thr-213 each carry the phosphothreonine modification. 2 positions are modified to phosphoserine: Ser-217 and Ser-227. The segment at 276–301 (CQQCFSHNGMALKEEFEYIAFRCAYC) adopts a C4-type; plays a role in ER morphology zinc-finger fold. Phosphoserine is present on residues Ser-321, Ser-353, and Ser-384. The disordered stretch occupies residues 361–428 (NNTEQTDDKI…ELNGESLTAE (68 aa)). Positions 386-401 (SEEPEEKQETENEEAS) are enriched in acidic residues. Ser-414 carries the phosphoserine modification.

The protein belongs to the lunapark family. Homodimer; homodimerization requires the C4-type zinc finger motif and decreases during mitosis in a phosphorylation-dependent manner. Myristoylated; myristoylation is necessary for the endoplasmic reticulum (ER) three-way ER tubular junction formation, but is not required neither for membrane translocation, membrane topology formation, nor for the specific localization to ER membranes. Post-translationally, phosphorylated. Phosphorylation occurs at Ser-177, Ser-182, Ser-217, Ser-227, Ser-321 and Ser-384 during interphase. Phosphorylation occurs at Ser-114, Ser-153, Ser-194, Thr-211 and Ser-353 during mitosis; these phosphorylations reduce both its homodimerization and the ER three-way tubular junction formation. In terms of processing, subject to proteasomal degradation following phosphorylation during mitosis.

The protein localises to the endoplasmic reticulum membrane. Functionally, endoplasmic reticulum (ER)-shaping membrane protein that plays a role in determining ER morphology. Involved in the stabilization of nascent three-way ER tubular junctions within the ER network. May also play a role as a curvature-stabilizing protein within three-way ER tubular junction network. May be involved in limb and central nervous system development. This Pongo abelii (Sumatran orangutan) protein is Endoplasmic reticulum junction formation protein lunapark.